Consider the following 313-residue polypeptide: D-apiose import binding protein (313 aa).

Positions 1-26 (MKLTRRLTLAAFASALALGTAMPAFA) are cleaved as a signal peptide. Residues Asn39, 115 to 116 (DR), 162 to 164 (DTN), Arg168, Asn218, Asp243, and Gln263 each bind D-apiofuranose.

The protein belongs to the bacterial solute-binding protein 2 family.

Its subcellular location is the periplasm. Part of an ABC transporter complex involved in D-apiose import. Binds D-apiose, D-ribose and D-ribulose. The polypeptide is D-apiose import binding protein (Rhizobium etli (strain ATCC 51251 / DSM 11541 / JCM 21823 / NBRC 15573 / CFN 42)).